A 1651-amino-acid chain; its full sequence is Protein Wiz (1651 aa).

Residues 1–79 (MEGSLAGSLA…TPDGRGPWEH (79 aa)) form a disordered region. Glycyl lysine isopeptide (Lys-Gly) (interchain with G-Cter in SUMO2) cross-links involve residues A11, R14, N29, G32, G39, G42, and E258. C2H2-type zinc fingers lie at residues 267 to 289 (FPCI…MSQH), 304 to 326 (LACG…RQLH), and 353 to 375 (LQCP…AKLH). F313 participates in a covalent cross-link: Glycyl lysine isopeptide (Lys-Gly) (interchain with G-Cter in SUMO2). The disordered stretch occupies residues 376-399 (MREPPGQTTKEPFGGSSGAGSPSP). The segment covering 386–399 (EPFGGSSGAGSPSP) has biased composition (low complexity). The segment at 416-439 (SACVFCGFPAPSESLLREHVRLVH) adopts a C2H2-type 4 zinc-finger fold. The tract at residues 546–578 (LGRNKSTVHPQGLGERRRPWSEEEEEEEEEEDV) is disordered. Residues 567 to 578 (EEEEEEEEEEDV) show a composition bias toward acidic residues. 2 consecutive C2H2-type zinc fingers follow at residues 701-723 (RKCP…VRGH) and 769-791 (MRCD…ARAH). The segment at 819–843 (AEQPPSPLGREPGGPPGSFLTSRRP) is disordered. The C2H2-type 7 zinc-finger motif lies at 870–892 (TTCEVCGACFETRKGLSSHARSH). Glycyl lysine isopeptide (Lys-Gly) (interchain with G-Cter in SUMO2) cross-links involve residues K883, K939, K955, K967, and K988. Positions 972–1038 (FSAKGLGHPP…GPLNLTSGPE (67 aa)) are disordered. Over residues 984–994 (PLLKKTPLALA) the composition is skewed to low complexity. A Phosphoserine modification is found at S996. Phosphothreonine is present on T998. Residues K1000 and K1005 each participate in a glycyl lysine isopeptide (Lys-Gly) (interchain with G-Cter in SUMO2) cross-link. 4 positions are modified to phosphoserine: S1006, S1012, S1017, and S1025. The interval 1030 to 1034 (PLNLT) is interaction with CTBP1 and CTBP2 1. Residues 1043–1065 (IRCEFCGEFFENRKGLSSHARSH) form a C2H2-type 8 zinc finger. Residue K1056 forms a Glycyl lysine isopeptide (Lys-Gly) (interchain with G-Cter in SUMO2) linkage. Phosphoserine is present on residues S1079 and S1106. Residues 1091 to 1174 (RTQSRPGGPP…PGLAAPSLPK (84 aa)) are disordered. The segment covering 1097 to 1106 (GGPPNPPGPS) has biased composition (pro residues). Glycyl lysine isopeptide (Lys-Gly) (interchain with G-Cter in SUMO2) cross-links involve residues K1108 and K1112. Phosphoserine occurs at positions 1122, 1127, and 1134. Residues K1138 and K1139 each participate in a glycyl lysine isopeptide (Lys-Gly) (interchain with G-Cter in SUMO2) cross-link. Phosphoserine occurs at positions 1146 and 1151. Position 1162 is an N6,N6,N6-trimethyllysine; by EHMT2; alternate (K1162). K1162 is subject to N6,N6-dimethyllysine; by EHMT2; alternate. Residue K1177 forms a Glycyl lysine isopeptide (Lys-Gly) (interchain with G-Cter in SUMO2) linkage. Positions 1214–1218 (PLNLS) are interaction with CTBP1 and CTBP2 2. The C2H2-type 9 zinc-finger motif lies at 1227–1249 (IRCEFCGEFFENRKGLSSHARSH). K1240 is covalently cross-linked (Glycyl lysine isopeptide (Lys-Gly) (interchain with G-Cter in SUMO2)). S1263 bears the Phosphoserine mark. A Glycyl lysine isopeptide (Lys-Gly) (interchain with G-Cter in SUMO2) cross-link involves residue K1282. The interval 1283 to 1331 (KEPPAGDLAPALAEDGPPTVAPGPVQSPLPLSPLAGRPGKPGAGPAQVP) is disordered. The span at 1301–1313 (TVAPGPVQSPLPL) shows a compositional bias: pro residues. Phosphoserine is present on residues S1309 and S1314. Low complexity predominate over residues 1315–1328 (PLAGRPGKPGAGPA). Glycyl lysine isopeptide (Lys-Gly) (interchain with G-Cter in SUMO2) cross-links involve residues K1343, K1356, K1370, K1372, and K1382. The C2H2-type 10 zinc finger occupies 1397–1419 (ACCELCGLYFENRKALASHARAH). Glycyl lysine isopeptide (Lys-Gly) (interchain with G-Cter in SUMO2) cross-links involve residues K1448, K1464, and K1477. Residues 1463-1554 (TKKFRSAGHG…ASAARGGEDT (92 aa)) form a disordered region. Position 1480 is a phosphoserine (S1480). The segment covering 1481–1493 (LGLAPGGLAVVGR) has biased composition (low complexity). At S1517 the chain carries Phosphoserine. K1523 is covalently cross-linked (Glycyl lysine isopeptide (Lys-Gly) (interchain with G-Cter in SUMO1); alternate). Residue K1523 forms a Glycyl lysine isopeptide (Lys-Gly) (interchain with G-Cter in SUMO2); alternate linkage. Basic and acidic residues predominate over residues 1523–1541 (KAEEHQRQNINKFERRQAR). Glycyl lysine isopeptide (Lys-Gly) (interchain with G-Cter in SUMO2) cross-links involve residues K1534 and K1560. The C2H2-type 11 zinc-finger motif lies at 1596 to 1622 (LKCRFCEVEFQGPLSIQEEWVRHLQRH). Positions 1629-1651 (SKADPPPEESQAPQAQTAAAEAP) are disordered. K1630 participates in a covalent cross-link: Glycyl lysine isopeptide (Lys-Gly) (interchain with G-Cter in SUMO2). Residues 1637–1651 (ESQAPQAQTAAAEAP) are compositionally biased toward low complexity.

This sequence belongs to the krueppel C2H2-type zinc-finger protein family. Interacts with EHMT1, EHMT2, CTBP1 and CTBP2. Part of a complex containing at least CDYL, REST, WIZ, SETB1, EHMT1 and EHMT2.

The protein resides in the nucleus. Its function is as follows. May link EHMT1 and EHMT2 histone methyltransferases to the CTBP corepressor machinery. May be involved in EHMT1-EHMT2 heterodimer formation and stabilization. The sequence is that of Protein Wiz (WIZ) from Homo sapiens (Human).